The following is a 116-amino-acid chain: Large ribosomal subunit protein bL17 (116 aa).

Belongs to the bacterial ribosomal protein bL17 family. As to quaternary structure, part of the 50S ribosomal subunit. Contacts protein L32.

The chain is Large ribosomal subunit protein bL17 from Crocosphaera subtropica (strain ATCC 51142 / BH68) (Cyanothece sp. (strain ATCC 51142)).